Here is a 394-residue protein sequence, read N- to C-terminus: RHOMBOID-like protein 4 (394 aa).

The segment at 1–51 (MGEKDSETAPIWGKTRERERSNNNNIQPMDLESSSSVSGQQRSLTQSRSSY) is disordered. Residues 39–49 (GQQRSLTQSRS) show a composition bias toward polar residues. The next 7 membrane-spanning stretches (helical) occupy residues 64 to 84 (WFPWLIPCFVVANVAVFVITM), 147 to 167 (WLHGGVVHLLMNMLTLLFIGI), 175 to 195 (FIRIGLLYLISGFGGSILSAL), 201 to 221 (ISVGASGAVFGLLGGMLSEIF), 231 to 251 (VVTIVTLVLIVAVNLGLGVLP), 254 to 274 (DNFAHIGGFATGFLLGFVLLI), and 300 to 320 (ILWTISLLILVAGFIVGLISL). Ser-206 (nucleophile) is an active-site residue. His-258 (charge relay system) is an active-site residue.

This sequence belongs to the peptidase S54 family.

The protein resides in the membrane. The catalysed reaction is Cleaves type-1 transmembrane domains using a catalytic dyad composed of serine and histidine that are contributed by different transmembrane domains.. Functionally, probable rhomboid-type serine protease that catalyzes intramembrane proteolysis. The protein is RHOMBOID-like protein 4 of Arabidopsis thaliana (Mouse-ear cress).